A 208-amino-acid chain; its full sequence is Thiamine-phosphate synthase (208 aa).

4-amino-2-methyl-5-(diphosphooxymethyl)pyrimidine-binding positions include 37–39 (QVR) and N70. D71 and D90 together coordinate Mg(2+). T109 provides a ligand contact to 4-amino-2-methyl-5-(diphosphooxymethyl)pyrimidine. 135–137 (TTS) lines the 2-[(2R,5Z)-2-carboxy-4-methylthiazol-5(2H)-ylidene]ethyl phosphate pocket. K138 serves as a coordination point for 4-amino-2-methyl-5-(diphosphooxymethyl)pyrimidine. Position 166 (G166) interacts with 2-[(2R,5Z)-2-carboxy-4-methylthiazol-5(2H)-ylidene]ethyl phosphate.

This sequence belongs to the thiamine-phosphate synthase family. Requires Mg(2+) as cofactor.

The enzyme catalyses 2-[(2R,5Z)-2-carboxy-4-methylthiazol-5(2H)-ylidene]ethyl phosphate + 4-amino-2-methyl-5-(diphosphooxymethyl)pyrimidine + 2 H(+) = thiamine phosphate + CO2 + diphosphate. It carries out the reaction 2-(2-carboxy-4-methylthiazol-5-yl)ethyl phosphate + 4-amino-2-methyl-5-(diphosphooxymethyl)pyrimidine + 2 H(+) = thiamine phosphate + CO2 + diphosphate. The catalysed reaction is 4-methyl-5-(2-phosphooxyethyl)-thiazole + 4-amino-2-methyl-5-(diphosphooxymethyl)pyrimidine + H(+) = thiamine phosphate + diphosphate. It participates in cofactor biosynthesis; thiamine diphosphate biosynthesis; thiamine phosphate from 4-amino-2-methyl-5-diphosphomethylpyrimidine and 4-methyl-5-(2-phosphoethyl)-thiazole: step 1/1. Condenses 4-methyl-5-(beta-hydroxyethyl)thiazole monophosphate (THZ-P) and 2-methyl-4-amino-5-hydroxymethyl pyrimidine pyrophosphate (HMP-PP) to form thiamine monophosphate (TMP). The protein is Thiamine-phosphate synthase of Salinispora arenicola (strain CNS-205).